The chain runs to 275 residues: Phosphonoacetaldehyde hydrolase (275 aa).

The active-site Nucleophile is the D15. Mg(2+)-binding residues include D15 and A17. Residue K56 is the Schiff-base intermediate with substrate of the active site. D189 serves as a coordination point for Mg(2+).

It belongs to the HAD-like hydrolase superfamily. PhnX family. As to quaternary structure, homodimer. Mg(2+) serves as cofactor.

It carries out the reaction phosphonoacetaldehyde + H2O = acetaldehyde + phosphate + H(+). Its function is as follows. Involved in phosphonate degradation. The polypeptide is Phosphonoacetaldehyde hydrolase (Pseudomonas aeruginosa (strain UCBPP-PA14)).